The chain runs to 987 residues: uncharacterized protein (987 aa).

Transmembrane regions (helical) follow at residues 12–32 (FIYLCILLFVFMASMLNSVSG) and 958–978 (VENNFEIFLILINVIFGLGIL).

The protein to M.jannaschii MJ1393 and A.fulgidus AF2028.

It is found in the cell membrane. This is an uncharacterized protein from Methanocaldococcus jannaschii (strain ATCC 43067 / DSM 2661 / JAL-1 / JCM 10045 / NBRC 100440) (Methanococcus jannaschii).